A 218-amino-acid chain; its full sequence is Protein U63 (218 aa).

Belongs to the herpesviridae UL92 family.

In Homo sapiens (Human), this protein is Protein U63 (U63).